The chain runs to 308 residues: Ornithine carbamoyltransferase (308 aa).

Carbamoyl phosphate-binding positions include 56-59 (STRT), Gln83, Arg107, and 134-137 (HPCQ). L-ornithine is bound by residues Asn165, Asp225, and 229 to 230 (SM). Carbamoyl phosphate is bound by residues 266 to 267 (CL) and Arg294.

This sequence belongs to the aspartate/ornithine carbamoyltransferase superfamily. OTCase family.

It localises to the cytoplasm. It carries out the reaction carbamoyl phosphate + L-ornithine = L-citrulline + phosphate + H(+). The protein operates within amino-acid biosynthesis; L-arginine biosynthesis; L-arginine from L-ornithine and carbamoyl phosphate: step 1/3. Its function is as follows. Reversibly catalyzes the transfer of the carbamoyl group from carbamoyl phosphate (CP) to the N(epsilon) atom of ornithine (ORN) to produce L-citrulline. The sequence is that of Ornithine carbamoyltransferase from Cereibacter sphaeroides (strain ATCC 17029 / ATH 2.4.9) (Rhodobacter sphaeroides).